Here is a 495-residue protein sequence, read N- to C-terminus: ATP synthase subunit beta, chloroplastic (495 aa).

172–179 is an ATP binding site; sequence GGAGVGKT.

It belongs to the ATPase alpha/beta chains family. As to quaternary structure, F-type ATPases have 2 components, CF(1) - the catalytic core - and CF(0) - the membrane proton channel. CF(1) has five subunits: alpha(3), beta(3), gamma(1), delta(1), epsilon(1). CF(0) has four main subunits: a(1), b(1), b'(1) and c(9-12).

It localises to the plastid. The protein localises to the chloroplast thylakoid membrane. It carries out the reaction ATP + H2O + 4 H(+)(in) = ADP + phosphate + 5 H(+)(out). Produces ATP from ADP in the presence of a proton gradient across the membrane. The catalytic sites are hosted primarily by the beta subunits. This Brimeura amethystina (Spanish hyacinth) protein is ATP synthase subunit beta, chloroplastic.